The following is a 223-amino-acid chain: Urease accessory protein UreF (223 aa).

Belongs to the UreF family. UreD, UreF and UreG form a complex that acts as a GTP-hydrolysis-dependent molecular chaperone, activating the urease apoprotein by helping to assemble the nickel containing metallocenter of UreC. The UreE protein probably delivers the nickel.

The protein localises to the cytoplasm. Functionally, required for maturation of urease via the functional incorporation of the urease nickel metallocenter. This Rhizobium etli (strain CIAT 652) protein is Urease accessory protein UreF.